A 313-amino-acid polypeptide reads, in one-letter code: Methionyl-tRNA formyltransferase (313 aa).

Residue 109 to 112 (SLLP) participates in (6S)-5,6,7,8-tetrahydrofolate binding.

The protein belongs to the Fmt family.

It carries out the reaction L-methionyl-tRNA(fMet) + (6R)-10-formyltetrahydrofolate = N-formyl-L-methionyl-tRNA(fMet) + (6S)-5,6,7,8-tetrahydrofolate + H(+). Its function is as follows. Attaches a formyl group to the free amino group of methionyl-tRNA(fMet). The formyl group appears to play a dual role in the initiator identity of N-formylmethionyl-tRNA by promoting its recognition by IF2 and preventing the misappropriation of this tRNA by the elongation apparatus. The sequence is that of Methionyl-tRNA formyltransferase from Thermotoga sp. (strain RQ2).